The following is an 803-amino-acid chain: Carbon monoxide dehydrogenase large chain (803 aa).

Residue arginine 384 is modified to 4-hydroxyarginine. Residue cysteine 385 participates in Cu(+) binding. Glutamate 757 is a Mo-molybdopterin cytosine dinucleotide binding site.

In terms of assembly, dimer of heterotrimers. Each heterotrimer consists of a large, a medium and a small subunit. The cofactor is Cu(+). Requires Mo-molybdopterin cytosine dinucleotide as cofactor.

The catalysed reaction is CO + a quinone + H2O = a quinol + CO2. In terms of biological role, catalyzes the oxidation of carbon monoxide to carbon dioxide. This chain is Carbon monoxide dehydrogenase large chain (cutL), found in Hydrogenophaga pseudoflava (Pseudomonas carboxydoflava).